The chain runs to 456 residues: Probable serine incorporator (456 aa).

The next 11 helical transmembrane spans lie at 10-32, 44-64, 95-115, 126-146, 153-173, 195-215, 234-254, 265-285, 301-321, 383-403, and 430-450; these read AASC…CCNF, IVYS…LAPG, VCFG…GVTS, GFWG…FFIP, VWMY…LVLL, VWAV…VAGI, KFFI…AIHP, LLQA…ALSF, LAGM…MVVY, VAYS…YIMM, and IASS…PALF.

The protein belongs to the TDE1 family.

Its subcellular location is the endoplasmic reticulum membrane. In terms of biological role, enhances the incorporation of serine into phosphatidylserine and sphingolipids. This is Probable serine incorporator (serinc) from Nematostella vectensis (Starlet sea anemone).